A 298-amino-acid chain; its full sequence is 4-diphosphocytidyl-2-C-methyl-D-erythritol kinase (298 aa).

Residue Lys11 is part of the active site. 94-104 provides a ligand contact to ATP; it reads PMGGGLGGGSS. Residue Asp136 is part of the active site.

It belongs to the GHMP kinase family. IspE subfamily.

The catalysed reaction is 4-CDP-2-C-methyl-D-erythritol + ATP = 4-CDP-2-C-methyl-D-erythritol 2-phosphate + ADP + H(+). It functions in the pathway isoprenoid biosynthesis; isopentenyl diphosphate biosynthesis via DXP pathway; isopentenyl diphosphate from 1-deoxy-D-xylulose 5-phosphate: step 3/6. Catalyzes the phosphorylation of the position 2 hydroxy group of 4-diphosphocytidyl-2C-methyl-D-erythritol. This chain is 4-diphosphocytidyl-2-C-methyl-D-erythritol kinase, found in Chromohalobacter salexigens (strain ATCC BAA-138 / DSM 3043 / CIP 106854 / NCIMB 13768 / 1H11).